The chain runs to 144 residues: Small ribosomal subunit protein bS16 (144 aa).

A disordered region spans residues 115 to 144 (NEPVAEAVTPKKKAKKDDAAAESTEAEAAE).

Belongs to the bacterial ribosomal protein bS16 family.

The polypeptide is Small ribosomal subunit protein bS16 (Nocardia farcinica (strain IFM 10152)).